The following is a 2684-amino-acid chain: Teneurin-1 (2684 aa).

Disordered stretches follow at residues 1–37 (MFQH…HDYT), 127–156 (TTSS…PTYS), and 170–204 (GTNQ…KKFD). At 1 to 216 (MFQHRTTNAQ…SDTCSRWPSK (216 aa)) the chain is on the cytoplasmic side. A compositionally biased stretch (pro residues) spans 11 to 24 (GPPPNRPMPRPPAG). Residues 127 to 136 (TTSSTLSPAS) are compositionally biased toward low complexity. A helical transmembrane segment spans residues 217-237 (WNILLAAALLVALFVICILLF). Residues 238–2684 (RAPNYVYTQP…VHSWKFRKSE (2447 aa)) are Extracellular-facing. EGF-like domains lie at 463-499 (TGRT…KECE) and 501-534 (RHNW…EACE). 6 disulfides stabilise this stretch: cysteine 467-cysteine 476, cysteine 472-cysteine 487, cysteine 489-cysteine 498, cysteine 505-cysteine 516, cysteine 510-cysteine 522, and cysteine 524-cysteine 533. The segment at 576–614 (PQAQSPPRRGQEPTESSKTRKAQVKPTPTSEKKKESREL) is disordered. Basic and acidic residues-rich tracts occupy residues 584–593 (RGQEPTESSK) and 605–614 (SEKKKESREL). 2 EGF-like domains span residues 650 to 684 (DSVD…SNCT) and 716 to 753 (AIDG…VDCS). 6 cysteine pairs are disulfide-bonded: cysteine 654-cysteine 666, cysteine 659-cysteine 672, cysteine 674-cysteine 683, cysteine 720-cysteine 730, cysteine 724-cysteine 741, and cysteine 743-cysteine 752. NHL repeat units follow at residues 1276-1317 (DSCG…IDTT), 1334-1378 (RTCA…VVHD), 1398-1441 (SASA…VRKL), and 1470-1513 (AVSL…VSAR).

Belongs to the tenascin family. Teneurin subfamily. Post-translationally, probably proteolytically processed to generate a N-terminal intracellular domain. As to expression, isoform 1 is mainly expressed in organs derived from the mesoderm, including the pharynx, vulva muscles, gonad distal tip cells, intestine and several tail neurons. Isoform 2 is mainly expressed in the organs derived from the ectoderm, including hypodermal cells, head ganglion neurons and tail neurons (at protein level).

It localises to the nucleus. It is found in the cell membrane. Its subcellular location is the membrane. Plays a role in the gonadal basement membrane maintenance and/or adhesion early in development. Contributes to the guidance of pharyngeal neurons. The polypeptide is Teneurin-1 (ten-1) (Caenorhabditis elegans).